Reading from the N-terminus, the 361-residue chain is RLA class I histocompatibility antigen, alpha chain 19-1 (361 aa).

A signal peptide spans 1–24; it reads MGSIPPRTLLLLLAGALTLKDTQA. The segment at 25–114 is alpha-1; that stretch reads GSHSMRYFYT…ALRYYNQSAA (90 aa). Residues 25 to 308 are Extracellular-facing; the sequence is GSHSMRYFYT…EPPAQPTALI (284 aa). A glycan (N-linked (GlcNAc...) asparagine) is linked at Asn110. The segment at 115–206 is alpha-2; the sequence is GSHTFQTMFG…EMGKETLQRA (92 aa). Intrachain disulfides connect Cys125/Cys188 and Cys227/Cys283. An alpha-3 region spans residues 207–298; it reads DPPKAHVTHH…GLPEPLTLTW (92 aa). One can recognise an Ig-like C1-type domain in the interval 209–297; sequence PKAHVTHHPA…EGLPEPLTLT (89 aa). The interval 299-308 is connecting peptide; it reads EPPAQPTALI. Residues 309–329 traverse the membrane as a helical segment; sequence VGIVAGVLGVLLILGAVVAVV. The Cytoplasmic segment spans residues 330 to 361; it reads RRKKHSSDGKGGRYTPAAGGHRDQGSDDSLMP. The disordered stretch occupies residues 335–361; it reads SSDGKGGRYTPAAGGHRDQGSDDSLMP. 2 positions are modified to phosphoserine: Ser355 and Ser358.

It belongs to the MHC class I family. In terms of assembly, heterodimer of an alpha chain and a beta chain (beta-2-microglobulin).

Its subcellular location is the membrane. Involved in the presentation of foreign antigens to the immune system. The chain is RLA class I histocompatibility antigen, alpha chain 19-1 from Oryctolagus cuniculus (Rabbit).